Reading from the N-terminus, the 234-residue chain is Thioredoxin-dependent peroxide reductase, mitochondrial (234 aa).

Residues 1–30 (MSFVARSLIRNVPLMGKAILSQQKQIAARL) constitute a mitochondrion transit peptide. The Thioredoxin domain occupies 40–198 (VRVQQPAPDF…VLRLIKAFQF (159 aa)). The active-site Cysteine sulfenic acid (-SOH) intermediate is the Cys-85.

Belongs to the peroxiredoxin family. AhpC/Prx1 subfamily. In terms of assembly, homodimer; disulfide-linked, upon oxidation. 6 homodimers assemble to form a ring-like dodecamer. Also exists as a monomer, however the monomeric form is present at a much lower level than the homodimeric form. As to expression, expressed in thoracic flight muscles (at protein level). Detected in the head and body (at protein level).

The protein resides in the mitochondrion. It catalyses the reaction a hydroperoxide + [thioredoxin]-dithiol = an alcohol + [thioredoxin]-disulfide + H2O. Thiol-specific peroxidase that catalyzes the reduction of hydrogen peroxide and organic hydroperoxides to water and alcohols, respectively. Plays a role in cell protection against oxidative stress by detoxifying peroxides. May be involved in aging-associated changes in the responsiveness to oxidative stress. Involved in the maintenance of global thiol redox homeostasis. Functions in the central nervous system (CNS) and in motor neurons and is essential for normal motor function. The sequence is that of Thioredoxin-dependent peroxide reductase, mitochondrial from Drosophila melanogaster (Fruit fly).